A 192-amino-acid polypeptide reads, in one-letter code: Ribosome maturation factor RimM (192 aa).

The region spanning Glu-97–Val-172 is the PRC barrel domain. The disordered stretch occupies residues Pro-168–Asp-192.

Belongs to the RimM family. As to quaternary structure, binds ribosomal protein uS19.

It localises to the cytoplasm. An accessory protein needed during the final step in the assembly of 30S ribosomal subunit, possibly for assembly of the head region. Essential for efficient processing of 16S rRNA. May be needed both before and after RbfA during the maturation of 16S rRNA. It has affinity for free ribosomal 30S subunits but not for 70S ribosomes. The polypeptide is Ribosome maturation factor RimM (Caulobacter sp. (strain K31)).